Reading from the N-terminus, the 702-residue chain is Elongation factor G (702 aa).

Residues 8 to 290 (ERYRNIGISA…AVIEYLPAPT (283 aa)) form the tr-type G domain. Residues 17–24 (AHIDAGKT), 88–92 (DTPGH), and 142–145 (NKMD) each bind GTP.

This sequence belongs to the TRAFAC class translation factor GTPase superfamily. Classic translation factor GTPase family. EF-G/EF-2 subfamily.

The protein localises to the cytoplasm. Catalyzes the GTP-dependent ribosomal translocation step during translation elongation. During this step, the ribosome changes from the pre-translocational (PRE) to the post-translocational (POST) state as the newly formed A-site-bound peptidyl-tRNA and P-site-bound deacylated tRNA move to the P and E sites, respectively. Catalyzes the coordinated movement of the two tRNA molecules, the mRNA and conformational changes in the ribosome. This is Elongation factor G from Yersinia pseudotuberculosis serotype O:1b (strain IP 31758).